The sequence spans 322 residues: Acetyl-coenzyme A carboxylase carboxyl transferase subunit alpha (322 aa).

Residues 30-293 enclose the CoA carboxyltransferase C-terminal domain; the sequence is AVDISAEILR…KKALQDSLKL (264 aa).

This sequence belongs to the AccA family. As to quaternary structure, acetyl-CoA carboxylase is a heterohexamer composed of biotin carboxyl carrier protein (AccB), biotin carboxylase (AccC) and two subunits each of ACCase subunit alpha (AccA) and ACCase subunit beta (AccD).

It is found in the cytoplasm. The catalysed reaction is N(6)-carboxybiotinyl-L-lysyl-[protein] + acetyl-CoA = N(6)-biotinyl-L-lysyl-[protein] + malonyl-CoA. It functions in the pathway lipid metabolism; malonyl-CoA biosynthesis; malonyl-CoA from acetyl-CoA: step 1/1. Its function is as follows. Component of the acetyl coenzyme A carboxylase (ACC) complex. First, biotin carboxylase catalyzes the carboxylation of biotin on its carrier protein (BCCP) and then the CO(2) group is transferred by the carboxyltransferase to acetyl-CoA to form malonyl-CoA. This chain is Acetyl-coenzyme A carboxylase carboxyl transferase subunit alpha, found in Nitrosospira multiformis (strain ATCC 25196 / NCIMB 11849 / C 71).